The sequence spans 88 residues: RNA-binding protein Hfq (88 aa).

Residues 9–68 (DPFLNALRRERIPVSIYLVNGIKLQGQIESFDQFVILLKNTVNQMVYKHAISTVVPARAV) form the Sm domain. The segment at 66–88 (RAVSHHSASDRPQGERPQEKTEE) is disordered. The segment covering 72-88 (SASDRPQGERPQEKTEE) has biased composition (basic and acidic residues).

It belongs to the Hfq family. In terms of assembly, homohexamer.

RNA chaperone that binds small regulatory RNA (sRNAs) and mRNAs to facilitate mRNA translational regulation in response to envelope stress, environmental stress and changes in metabolite concentrations. Also binds with high specificity to tRNAs. This chain is RNA-binding protein Hfq, found in Aliivibrio fischeri (strain ATCC 700601 / ES114) (Vibrio fischeri).